The chain runs to 225 residues: Urease accessory protein UreG (225 aa).

25–32 (GPVGAGKT) contacts GTP.

Belongs to the SIMIBI class G3E GTPase family. UreG subfamily. In terms of assembly, homodimer. UreD, UreF and UreG form a complex that acts as a GTP-hydrolysis-dependent molecular chaperone, activating the urease apoprotein by helping to assemble the nickel containing metallocenter of UreC. The UreE protein probably delivers the nickel.

The protein resides in the cytoplasm. In terms of biological role, facilitates the functional incorporation of the urease nickel metallocenter. This process requires GTP hydrolysis, probably effectuated by UreG. The polypeptide is Urease accessory protein UreG (Haemophilus influenzae (strain ATCC 51907 / DSM 11121 / KW20 / Rd)).